Reading from the N-terminus, the 1172-residue chain is WD repeat-containing protein 48 homolog (1172 aa).

Residues 1-115 (MYEYYSTGKI…HSYGGGGGGT (115 aa)) are disordered. Residues 13 to 36 (LPQQVDSNGINSKPMNSSPSTPIP) are compositionally biased toward polar residues. The segment covering 37-63 (NNNNNNNNNNNNNNNNNNNNNNNNNNN) has biased composition (low complexity). The span at 64 to 89 (RNKSQQSFYLNNNNRNCGFSSPTKPQ) shows a compositional bias: polar residues. Low complexity predominate over residues 90 to 107 (YNNNNNNNNNNNSNYNHS). WD repeat units lie at residues 152 to 202 (RHCF…GFKF), 208 to 246 (DHTD…CVNS), 249 to 548 (FHDD…SPMF), 560 to 599 (GEGI…KIFK), 602 to 641 (GHTD…CIQV), 645 to 683 (LHTD…QSRL), and 686 to 727 (RENE…NQSI). Over residues 341-365 (ISTNNNNNNSSSSNNNNNNNNNNNN) the composition is skewed to low complexity. The segment at 341-544 (ISTNNNNNNS…NDNNNLNKKF (204 aa)) is disordered. Composition is skewed to polar residues over residues 366–377 (GQTNTHENTAET), 388–408 (QLSS…NFRN), and 417–434 (PPSS…SNGR). Residues 435 to 485 (NVNNRENNNNNNNNNNNNNNNNNNNNNNNNNNNNNNNNNINNNNHENNGNV) are compositionally biased toward low complexity. Residues 486-503 (DVDDEDDDDDDDDDDDDD) are compositionally biased toward acidic residues. Basic and acidic residues predominate over residues 504–513 (CNKNKKKYDD). Low complexity predominate over residues 514–543 (NNNNNNYNNNNNKKNNSNDNNNDNNNLNKK). A compositionally biased stretch (low complexity) spans 745–769 (NNNNNNNNNNNNNNNNNNNNNNNNN). The interval 745 to 775 (NNNNNNNNNNNNNNNNNNNNNNNNNNREKLS) is disordered. The WD 8 repeat unit spans residues 794 to 833 (QGRAGIIKNQVLNNRRQVLTKDNDNNVQLWDITKGKEIES). The disordered stretch occupies residues 926–986 (ELNHSNDSVN…TNSTTPNSGR (61 aa)). The span at 930–984 (SNDSVNSSLSSNTSGDNNNNNYNNYNNYNNNNNNGLQKSSSSSSIVSTNSTTPNS) shows a compositional bias: low complexity.

This sequence belongs to the WD repeat WDR48 family.

The polypeptide is WD repeat-containing protein 48 homolog (Dictyostelium discoideum (Social amoeba)).